A 101-amino-acid chain; its full sequence is C-X-C motif chemokine 3 (101 aa).

The signal sequence occupies residues M1–A32. Disulfide bonds link C37-C63 and C39-C79.

It belongs to the intercrine alpha (chemokine CxC) family.

The protein localises to the secreted. Functionally, ligand for CXCR2. Has chemotactic activity for neutrophils. May play a role in inflammation and exert its effects on endothelial cells in an autocrine fashion. This chain is C-X-C motif chemokine 3 (Cxcl3), found in Rattus norvegicus (Rat).